Here is a 1220-residue protein sequence, read N- to C-terminus: DNA-directed RNA polymerase subunit beta (1220 aa).

Belongs to the RNA polymerase beta chain family. In terms of assembly, the RNAP catalytic core consists of 2 alpha, 1 beta, 1 beta' and 1 omega subunit. When a sigma factor is associated with the core the holoenzyme is formed, which can initiate transcription.

It catalyses the reaction RNA(n) + a ribonucleoside 5'-triphosphate = RNA(n+1) + diphosphate. DNA-dependent RNA polymerase catalyzes the transcription of DNA into RNA using the four ribonucleoside triphosphates as substrates. The protein is DNA-directed RNA polymerase subunit beta of Mesomycoplasma hyopneumoniae (strain 232) (Mycoplasma hyopneumoniae).